The chain runs to 289 residues: Release factor glutamine methyltransferase (289 aa).

Residues 122-126, Asp145, Trp174, and Asn189 each bind S-adenosyl-L-methionine; that span reads GVGSG. 189 to 192 provides a ligand contact to substrate; it reads NPPY.

The protein belongs to the protein N5-glutamine methyltransferase family. PrmC subfamily.

It carries out the reaction L-glutaminyl-[peptide chain release factor] + S-adenosyl-L-methionine = N(5)-methyl-L-glutaminyl-[peptide chain release factor] + S-adenosyl-L-homocysteine + H(+). Functionally, methylates the class 1 translation termination release factors RF1/PrfA and RF2/PrfB on the glutamine residue of the universally conserved GGQ motif. The sequence is that of Release factor glutamine methyltransferase from Caulobacter vibrioides (strain ATCC 19089 / CIP 103742 / CB 15) (Caulobacter crescentus).